A 126-amino-acid polypeptide reads, in one-letter code: Holo-[acyl-carrier-protein] synthase (126 aa).

Mg(2+) is bound by residues aspartate 8 and glutamate 59.

The protein belongs to the P-Pant transferase superfamily. AcpS family. The cofactor is Mg(2+).

It is found in the cytoplasm. It carries out the reaction apo-[ACP] + CoA = holo-[ACP] + adenosine 3',5'-bisphosphate + H(+). In terms of biological role, transfers the 4'-phosphopantetheine moiety from coenzyme A to a Ser of acyl-carrier-protein. The protein is Holo-[acyl-carrier-protein] synthase of Rickettsia akari (strain Hartford).